A 232-amino-acid polypeptide reads, in one-letter code: 6-hydroxymethyl-7,8-dihydropterin pyrophosphokinase (232 aa).

This sequence belongs to the archaeal 6-HMPDK family. Requires Mg(2+) as cofactor.

The catalysed reaction is 6-hydroxymethyl-7,8-dihydropterin + ATP = (7,8-dihydropterin-6-yl)methyl diphosphate + AMP + H(+). Its pathway is cofactor biosynthesis; 5,6,7,8-tetrahydromethanopterin biosynthesis. Its function is as follows. Catalyzes the transfer of diphosphate from ATP to 6-hydroxymethyl-7,8-dihydropterin (6-HMD), leading to 6-hydroxymethyl-7,8-dihydropterin diphosphate (6-HMDP). The chain is 6-hydroxymethyl-7,8-dihydropterin pyrophosphokinase from Methanothermobacter thermautotrophicus (strain ATCC 29096 / DSM 1053 / JCM 10044 / NBRC 100330 / Delta H) (Methanobacterium thermoautotrophicum).